Here is a 347-residue protein sequence, read N- to C-terminus: MEFCVLFGGASFEHEISIVSAIALKEVLKDRIKHFIFLDENHHFYLIEASNMHSKYFAQIKEKKLPPLILAHNGLLKNSFLGTKIIELPLVINLVHGGDGEDGKLASLLEFYRIAFIGPRIEASVLSYNKYLTKLYAKDLGVKTLDYVLLNEKNRANALDLIKFNFPFIVKPSNAGSSLGVNVVKEEKELVYALDSAFEYSKEVLIEPFIQGVKEYNLAGCKIKTDFCFSYIEEPNKQEFLDFKQKYLDFSRNKAPKANLSNALEEQLKENFKKLYNDLFSGAIIRCDFFVIENEVYLNEINPIPGSLAHYLFDDFKTTLENLAQSLPKTPKIQVKNSYLLQIQKNK.

In terms of domain architecture, ATP-grasp spans Lys-134 to Lys-332. Leu-161–Tyr-216 lines the ATP pocket. Residues Asp-288, Glu-300, and Asn-302 each coordinate Mg(2+).

This sequence belongs to the D-alanine--D-alanine ligase family. Mg(2+) serves as cofactor. Requires Mn(2+) as cofactor.

The protein resides in the cytoplasm. It catalyses the reaction 2 D-alanine + ATP = D-alanyl-D-alanine + ADP + phosphate + H(+). The protein operates within cell wall biogenesis; peptidoglycan biosynthesis. Its function is as follows. Cell wall formation. The polypeptide is D-alanine--D-alanine ligase (Helicobacter pylori (strain P12)).